A 188-amino-acid polypeptide reads, in one-letter code: Elongation factor P (188 aa).

The protein belongs to the elongation factor P family.

Its subcellular location is the cytoplasm. Its pathway is protein biosynthesis; polypeptide chain elongation. In terms of biological role, involved in peptide bond synthesis. Stimulates efficient translation and peptide-bond synthesis on native or reconstituted 70S ribosomes in vitro. Probably functions indirectly by altering the affinity of the ribosome for aminoacyl-tRNA, thus increasing their reactivity as acceptors for peptidyl transferase. The protein is Elongation factor P of Chlorobaculum tepidum (strain ATCC 49652 / DSM 12025 / NBRC 103806 / TLS) (Chlorobium tepidum).